Reading from the N-terminus, the 691-residue chain is DNA ligase (691 aa).

Residues 41–45, 90–91, and E130 contribute to the NAD(+) site; these read DAEYD and SL. K132 functions as the N6-AMP-lysine intermediate in the catalytic mechanism. NAD(+) contacts are provided by R153, E190, K307, and K331. The Zn(2+) site is built by C425, C428, C443, and C449. The 82-residue stretch at 610 to 691 folds into the BRCT domain; the sequence is APQGVLAGKT…LHQLLEGNTP (82 aa).

Belongs to the NAD-dependent DNA ligase family. LigA subfamily. It depends on Mg(2+) as a cofactor. The cofactor is Mn(2+).

It catalyses the reaction NAD(+) + (deoxyribonucleotide)n-3'-hydroxyl + 5'-phospho-(deoxyribonucleotide)m = (deoxyribonucleotide)n+m + AMP + beta-nicotinamide D-nucleotide.. DNA ligase that catalyzes the formation of phosphodiester linkages between 5'-phosphoryl and 3'-hydroxyl groups in double-stranded DNA using NAD as a coenzyme and as the energy source for the reaction. It is essential for DNA replication and repair of damaged DNA. This is DNA ligase from Burkholderia lata (strain ATCC 17760 / DSM 23089 / LMG 22485 / NCIMB 9086 / R18194 / 383).